Here is a 967-residue protein sequence, read N- to C-terminus: Kinesin heavy chain (967 aa).

The Kinesin motor domain maps to 8-326; the sequence is NIKVICRVRP…LLFGQRAKTI (319 aa). 85 to 92 is a binding site for ATP; the sequence is GQTSSGKT. The tract at residues 173-314 is microtubule-binding; sequence VSSPEEVMEV…PASYNESETK (142 aa). 2 disordered regions span residues 387 to 411 and 923 to 967; these read VPAE…NEGD and KPIR…ESKA. Residues 392-861 are a coiled coil; that stretch reads PATSTTSLAG…RDNADLRCEL (470 aa). Residues 862 to 967 are globular; sequence PKLEKRLRAT…PIRMAPESKA (106 aa). Residues 949-958 show a composition bias toward polar residues; the sequence is QNGPMITSTP.

This sequence belongs to the TRAFAC class myosin-kinesin ATPase superfamily. Kinesin family. Kinesin subfamily. In terms of assembly, oligomer composed of two heavy chains and two light chains. Interacts with amyloid-beta precursor-like protein (via cytoplasmic domain).

It is found in the cytoplasm. The protein localises to the cytoskeleton. The protein resides in the cell projection. It localises to the axon. Functionally, kinesin is a microtubule-associated force-producing protein that may play a role in organelle transport. The protein is Kinesin heavy chain of Doryteuthis pealeii (Longfin inshore squid).